The sequence spans 272 residues: Magnetosome protein MamQ (272 aa).

At Met1–Pro46 the chain is on the cytoplasmic side. A helical transmembrane segment spans residues Val47–Met67. The Lumenal portion of the chain corresponds to Arg68–Asn272.

It belongs to the LemA family.

The protein resides in the magnetosome membrane. Its subcellular location is the cell inner membrane. Essential for magnetosome formation. Not essential for formation of magnetosome membrane vesicles. One of 7 genes (mamLQBIEMO) able to induce magnetosome membrane biogenesis; coexpression of mamLQRBIEMO in a deletion of the 17 gene mamAB operon restores magnetosome vesicle formation but not magnetite biosynthesis. The polypeptide is Magnetosome protein MamQ (Magnetospirillum gryphiswaldense (strain DSM 6361 / JCM 21280 / NBRC 15271 / MSR-1)).